The sequence spans 470 residues: MKFLLILLLQATASGALPLNSSTSLEKNNVLFGERYLEKFYGLEINKLPVTKMKYSGNLMKEKIQEMQHFLGLKVTGQLDTSTLEMMHAPRCGVPDVHHFREMPGGPVWRKHYITYRINNYTPDMNREDVDYAIRKAFQVWSNVTPLKFSKINTGMADILVVFARGAHGDFHAFDGKGGILAHAFGPGSGIGGDAHFDEDEFWTTHSGGTNLFLTAVHEIGHSLGLGHSSDPKAVMFPTYKYVDINTFRLSADDIRGIQSLYGDPKENQRLPNPDNSEPALCDPNLSFDAVTTVGNKIFFFKDRFFWLKVSERPKTSVNLISSLWPTLPSGIEAAYEIEARNQVFLFKDDKYWLISNLRPEPNYPKSIHSFGFPNFVKKIDAAVFNPRFYRTYFFVDNQYWRYDERRQMMDPGYPKLITKNFQGIGPKIDAVFYSKNKYYYFFQGSNQFEYDFLLQRITKTLKSNSWFGC.

The first 16 residues, 1–16 (MKFLLILLLQATASGA), serve as a signal peptide directing secretion. Positions 17–105 (LPLNSSTSLE…DVHHFREMPG (89 aa)) are cleaved as a propeptide — activation peptide. Asparagine 20 carries N-linked (GlcNAc...) asparagine glycosylation. The Cysteine switch signature appears at 90–97 (PRCGVPDV). Cysteine 92 lines the Zn(2+) pocket. Ca(2+) contacts are provided by aspartate 124 and aspartate 158. Zn(2+) is bound by residues histidine 168 and aspartate 170. Aspartate 175, glycine 176, glycine 178, and isoleucine 180 together coordinate Ca(2+). Histidine 183 contributes to the Zn(2+) binding site. The Ca(2+) site is built by glycine 190, glycine 192, and aspartate 194. A Zn(2+)-binding site is contributed by histidine 196. Ca(2+) contacts are provided by aspartate 198, glutamate 199, and glutamate 201. A Zn(2+)-binding site is contributed by histidine 218. The active site involves glutamate 219. 2 residues coordinate Zn(2+): histidine 222 and histidine 228. 4 Hemopexin repeats span residues 279 to 328 (PALC…WPTL), 329 to 375 (PSGI…GFPN), 377 to 425 (VKKI…FQGI), and 426 to 470 (GPKI…WFGC). Cysteines 282 and 470 form a disulfide. Asparagine 285 carries an N-linked (GlcNAc...) asparagine glycan. Residues aspartate 289, glutamate 333, aspartate 381, and aspartate 430 each contribute to the Ca(2+) site.

It belongs to the peptidase M10A family. It depends on Ca(2+) as a cofactor. Zn(2+) serves as cofactor. Found in alveolar macrophages but not in peripheral blood monocytes.

Its subcellular location is the secreted. The protein resides in the extracellular space. It is found in the extracellular matrix. It catalyses the reaction Hydrolysis of soluble and insoluble elastin. Specific cleavages are also produced at 14-Ala-|-Leu-15 and 16-Tyr-|-Leu-17 in the B chain of insulin.. Functionally, may be involved in tissue injury and remodeling. Has significant elastolytic activity. Can accept large and small amino acids at the P1' site, but has a preference for leucine. Aromatic or hydrophobic residues are preferred at the P1 site, with small hydrophobic residues (preferably alanine) occupying P3. The sequence is that of Macrophage metalloelastase (MMP12) from Homo sapiens (Human).